The primary structure comprises 526 residues: Na(+)/H(+) antiporter NhaB (526 aa).

A run of 13 helical transmembrane segments spans residues 14–34 (FLGY…LINP), 35–55 (LLFY…EFIF), 99–119 (MLLV…LFVF), 122–142 (LLLR…AAAF), 146–166 (FLDA…FYGI), 206–226 (LMMH…VGEP), 239–259 (FVDF…CGIL), 307–327 (AVIG…VGLI), 328–348 (GLSV…HAIG), 357–377 (FTAL…QQLF), 397–417 (YLFN…SVYI), 451–471 (ATPN…APLI), and 479–499 (VIMA…CVEF).

Belongs to the NhaB Na(+)/H(+) (TC 2.A.34) antiporter family.

It localises to the cell inner membrane. The enzyme catalyses 2 Na(+)(in) + 3 H(+)(out) = 2 Na(+)(out) + 3 H(+)(in). In terms of biological role, na(+)/H(+) antiporter that extrudes sodium in exchange for external protons. The chain is Na(+)/H(+) antiporter NhaB from Pectobacterium atrosepticum (strain SCRI 1043 / ATCC BAA-672) (Erwinia carotovora subsp. atroseptica).